Here is a 90-residue protein sequence, read N- to C-terminus: Small ribosomal subunit protein uS15 (90 aa).

This sequence belongs to the universal ribosomal protein uS15 family. Part of the 30S ribosomal subunit. Forms a bridge to the 50S subunit in the 70S ribosome, contacting the 23S rRNA.

In terms of biological role, one of the primary rRNA binding proteins, it binds directly to 16S rRNA where it helps nucleate assembly of the platform of the 30S subunit by binding and bridging several RNA helices of the 16S rRNA. Functionally, forms an intersubunit bridge (bridge B4) with the 23S rRNA of the 50S subunit in the ribosome. This chain is Small ribosomal subunit protein uS15, found in Helicobacter pylori (strain J99 / ATCC 700824) (Campylobacter pylori J99).